Reading from the N-terminus, the 456-residue chain is Bifunctional protein GlmU (456 aa).

Residues 1-229 (MLNNAMSVVI…LSEVEGVNNR (229 aa)) are pyrophosphorylase. UDP-N-acetyl-alpha-D-glucosamine contacts are provided by residues 11 to 14 (LAAG), Lys-25, Gln-76, 81 to 82 (GT), 103 to 105 (YGD), Gly-140, Glu-154, Asn-169, and Asn-227. Asp-105 is a binding site for Mg(2+). Mg(2+) is bound at residue Asn-227. Positions 230 to 250 (LQLSRLERVYQSEQAEKLLLA) are linker. Residues 251 to 456 (GVMLRDPARF…EGWRRPVKKK (206 aa)) form an N-acetyltransferase region. Residues Arg-333 and Lys-351 each contribute to the UDP-N-acetyl-alpha-D-glucosamine site. Residue His-363 is the Proton acceptor of the active site. 2 residues coordinate UDP-N-acetyl-alpha-D-glucosamine: Tyr-366 and Asn-377. Acetyl-CoA is bound by residues Ala-380, 386 to 387 (NY), Ser-405, Ala-423, and Arg-440.

In the N-terminal section; belongs to the N-acetylglucosamine-1-phosphate uridyltransferase family. It in the C-terminal section; belongs to the transferase hexapeptide repeat family. As to quaternary structure, homotrimer. It depends on Mg(2+) as a cofactor.

The protein resides in the cytoplasm. It catalyses the reaction alpha-D-glucosamine 1-phosphate + acetyl-CoA = N-acetyl-alpha-D-glucosamine 1-phosphate + CoA + H(+). The enzyme catalyses N-acetyl-alpha-D-glucosamine 1-phosphate + UTP + H(+) = UDP-N-acetyl-alpha-D-glucosamine + diphosphate. The protein operates within nucleotide-sugar biosynthesis; UDP-N-acetyl-alpha-D-glucosamine biosynthesis; N-acetyl-alpha-D-glucosamine 1-phosphate from alpha-D-glucosamine 6-phosphate (route II): step 2/2. It functions in the pathway nucleotide-sugar biosynthesis; UDP-N-acetyl-alpha-D-glucosamine biosynthesis; UDP-N-acetyl-alpha-D-glucosamine from N-acetyl-alpha-D-glucosamine 1-phosphate: step 1/1. Its pathway is bacterial outer membrane biogenesis; LPS lipid A biosynthesis. Catalyzes the last two sequential reactions in the de novo biosynthetic pathway for UDP-N-acetylglucosamine (UDP-GlcNAc). The C-terminal domain catalyzes the transfer of acetyl group from acetyl coenzyme A to glucosamine-1-phosphate (GlcN-1-P) to produce N-acetylglucosamine-1-phosphate (GlcNAc-1-P), which is converted into UDP-GlcNAc by the transfer of uridine 5-monophosphate (from uridine 5-triphosphate), a reaction catalyzed by the N-terminal domain. The chain is Bifunctional protein GlmU from Escherichia coli (strain 55989 / EAEC).